The chain runs to 500 residues: Glycerol kinase (500 aa).

An ADP-binding site is contributed by threonine 11. ATP is bound by residues threonine 11, threonine 12, and serine 13. A sn-glycerol 3-phosphate-binding site is contributed by threonine 11. Arginine 15 is an ADP binding site. Sn-glycerol 3-phosphate is bound by residues arginine 81, glutamate 82, tyrosine 133, and aspartate 242. Arginine 81, glutamate 82, tyrosine 133, aspartate 242, and glutamine 243 together coordinate glycerol. ADP is bound by residues threonine 264 and glycine 307. The ATP site is built by threonine 264, glycine 307, glutamine 311, and glycine 411. Glycine 411 serves as a coordination point for ADP.

This sequence belongs to the FGGY kinase family.

The catalysed reaction is glycerol + ATP = sn-glycerol 3-phosphate + ADP + H(+). It functions in the pathway polyol metabolism; glycerol degradation via glycerol kinase pathway; sn-glycerol 3-phosphate from glycerol: step 1/1. Inhibited by fructose 1,6-bisphosphate (FBP). Its function is as follows. Key enzyme in the regulation of glycerol uptake and metabolism. Catalyzes the phosphorylation of glycerol to yield sn-glycerol 3-phosphate. The protein is Glycerol kinase of Bradyrhizobium sp. (strain ORS 278).